The following is a 204-amino-acid chain: Putative copper-binding protein (204 aa).

Residues C77, C81, and H166 each contribute to the Cu cation site.

This sequence belongs to the SCO1/2 family.

This is Putative copper-binding protein (scoP) from Stutzerimonas stutzeri (Pseudomonas stutzeri).